Reading from the N-terminus, the 507-residue chain is Cyclic GMP-AMP synthase (507 aa).

The segment at 1–146 is DNA-binding; that stretch reads MEDPRRRTTA…PRAPRGSRKE (146 aa). Residues 1 to 151 form a disordered region; it reads MEDPRRRTTA…GSRKEPDKLK (151 aa). Residues 7-18 are compositionally biased toward basic residues; it reads RTTAPRAKKPSA. Over residues 44 to 57 the composition is skewed to basic and acidic residues; the sequence is RRAERDGDTTEKPR. The interval 48–59 is required for association with the cell membrane; the sequence is RDGDTTEKPRAP. A Phosphothreonine modification is found at Thr52. The interval 119–132 is required for activation upon DNA viral infection; sequence RKVVRGPSHRRGAR. Residues 121 to 131 show a composition bias toward basic residues; sequence VVRGPSHRRGA. The Nuclear export signal motif lies at 154-159; that stretch reads LDKLRL. Lys156 is modified (N6-lactoyllysine). Positions 158-201 are DNA-binding; that stretch reads RLKRKDISEAAETVNKVVERLLRRMQKRESEFKGVEQLNTGSYY. Residue Glu176 is modified to PolyADP-ribosyl glutamic acid. Residue Thr197 participates in GTP binding. Ser199 serves as a coordination point for ATP. Residue Ser199 is modified to Phosphoserine. Tyr201 is modified (phosphotyrosine). Mg(2+)-binding residues include Glu211 and Asp213. Asp213 provides a ligand contact to 2',3'-cGAMP. Residue Lys217 forms a Glycyl lysine isopeptide (Lys-Gly) (interchain with G-Cter in SUMO) linkage. A Glycyl lysine isopeptide (Lys-Gly) (interchain with G-Cter in ubiquitin) cross-link involves residue Lys271. The residue at position 272 (Glu272) is a 5-glutamyl polyglutamate. Residues 281-291 carry the Nuclear localization signal motif; sequence DVSVEKEKPGS. Position 290 (Gly290) interacts with 2',3'-cGAMP. Ser291 bears the Phosphoserine; by CDK1 and PKB mark. At Glu302 the chain carries 5-glutamyl glutamate. Asp307 contributes to the GTP binding site. Asp307 contacts Mg(2+). Residue Asp307 participates in 2',3'-cGAMP binding. Residues 329–370 form an interaction with collided ribosomes region; it reads QGWLGTKVRTNLRREPFYLVPKNAKDGNSFQGETWRLSFSHT. Residue Lys335 forms a Glycyl lysine isopeptide (Lys-Gly) (interchain with G-Cter in SUMO); alternate linkage. A Glycyl lysine isopeptide (Lys-Gly) (interchain with G-Cter in ubiquitin); alternate cross-link involves residue Lys335. Residues Lys350 and 364-366 contribute to the 2',3'-cGAMP site; that span reads RLS. 364-371 lines the GTP pocket; it reads RLSFSHTE. Glu371 contributes to the ATP binding site. Lys372 participates in a covalent cross-link: Glycyl lysine isopeptide (Lys-Gly) (interchain with G-Cter in SUMO); alternate. A Glycyl lysine isopeptide (Lys-Gly) (interchain with G-Cter in ubiquitin); alternate cross-link involves residue Lys372. Lys372 carries the post-translational modification N6-acetyllysine. The interval 372-395 is DNA-binding; that stretch reads KYILNNHGIEKTCCESSGAKCCRK. His378 contributes to the Zn(2+) binding site. Lys382 is covalently cross-linked (Glycyl lysine isopeptide (Lys-Gly) (interchain with G-Cter in SUMO)). Lys382 carries the post-translational modification N6-acetyllysine. Zn(2+) contacts are provided by Cys384, Cys385, and Cys392. Residues Cys392 and Cys393 are each lipidated (S-palmitoyl cysteine). Glycyl lysine isopeptide (Lys-Gly) (interchain with G-Cter in ubiquitin) cross-links involve residues Lys399, Lys402, Lys409, and Lys410. Residue Lys402 participates in ATP binding. Lys402 bears the N6-acetyllysine mark. Ser420 carries the post-translational modification Phosphoserine. Residue 420–424 participates in ATP binding; it reads SYHVK. The S-palmitoyl cysteine moiety is linked to residue Cys459. Residue Lys464 forms a Glycyl lysine isopeptide (Lys-Gly) (interchain with G-Cter in SUMO); alternate linkage. A Glycyl lysine isopeptide (Lys-Gly) (interchain with G-Cter in ubiquitin); alternate cross-link involves residue Lys464. At Lys491 the chain carries N6-methyllysine.

It belongs to the mab-21 family. Monomer in the absence of DNA. Homodimer in presence of dsDNA: forms a 2:2 dimer with two enzymes binding to two DNA molecules. Interacts with nucleosomes; interaction is mainly mediated via histones H2A and H2B and inactivates the nucleotidyltransferase activity by blocking DNA-binding and subsequent activation. Interacts with PQBP1 (via WW domain). Interacts with TRIM14; this interaction recruits USP14, leading to deubiquitinate and stabilize CGAS and promote type I interferon production. Interacts with ZCCHC3; promoting sensing of dsDNA by CGAS. Interacts (when not monomethylated) with (poly-ADP-ribosylated) PARP1; interaction takes place in the nucleus and prevents the formation of the PARP1-TIMELESS complex. Interacts (when monomethylated) with SGF29; interaction with SGF29 prevents interaction with PARP1. Interacts with PCBP2; preventing the formation of liquid-like droplets in which CGAS is activated. Interacts with Irgm1; promoting CGAS degradation. Interacts with DDX41. The cofactor is Mg(2+). Mn(2+) is required as a cofactor. It depends on Zn(2+) as a cofactor. Post-translationally, the N-terminal disordered part (1-146) is phosphorylated by AURKB during the G2-M transition, blocking CGAS liquid phase separation and preventing activation. Phosphorylation at Tyr-201 by BLK promotes cytosolic retention. Localizes into the nucleus following dephosphorylation at Tyr-201. Phosphorylation at Ser-420 activates the nucleotidyltransferase activity. Dephosphorylation at Ser-420 by PPP6C impairs its ability to bind GTP, thereby inactivating it. Phosphorylation at Thr-52 and Ser-199 by PRKDC inhibits its cyclic GMP-AMP synthase activity by impairing homodimerization and activation. Phosphorylation at Ser-291 by AKT (AKT1, AKT2 or AKT3) suppresses the nucleotidyltransferase activity. Phosphorylation at Ser-291 by CDK1 during mitosis leads to its inhibition, thereby preventing CGAS activation by self-DNA during mitosis. Dephosphorylated at Ser-291 by protein phosphatase PP1 upon mitotic exit. In terms of processing, ubiquitinated at Lys-402 via 'Lys-48'-linked polyubiquitin chains, leading to its SQSTM1-mediated autophagic degradation. Interaction with TRIM14 promotes recruitment of USP14, leading to deubiquitinate Lys-402 and stabilize CGAS. Ubiquitinated at Lys-372 by RNF185 via 'Lys-27'-linked polyubiquitination, promoting CGAS cyclic GMP-AMP synthase activity. Monoubiquitination at Lys-335 by TRIM56 promotes oligomerization and subsequent activation. Monoubiquitination by TRIM41 promotes CGAS activation. Ubiquitination at Lys-271 and Lys-464 via 'Lys-48'-linked polyubiquitination promotes its degradation. Deubiquitination at Lys-271 by USP29 promotes its stabilization. Deubiquitinated by USP27X, promoting its stabilization. Ubiquitinated at Lys-399 via 'Lys-63'-linked polyubiquitin chains by MARCHF8, leading to the inhibition of its DNA binding ability. In cycling cells, nucleosome-bound CGAS is ubiquitinated at Lys-409 and Lys-410 via 'Lys-48'-linked polyubiquitin chains by the ECS(SPSB3) complex, leading to its degradation: ubiquitination and degradation of nuclear CGAS during G1 and G2 phases is required to promote low intranuclear CGAS abundance before the next mitotic cycle. Sumoylated at Lys-217 and Lys-464 by TRIM38 in uninfected cells and during the early phase of viral infection, promoting its stability by preventing ubiquitination at Lys-271 and Lys-464, and subsequent degradation. Desumoylated by SENP2 during the late phase of viral infection. Sumoylation at Lys-335, Lys-372 and Lys-382 prevents DNA-binding, oligomerization and nucleotidyltransferase activity. Desumoylation at Lys-335, Lys-372 and Lys-382 by SENP7 relieves inhibition and activates CGAS. Post-translationally, polyglutamylated by TTLL6 at Glu-272, leading to impair DNA-binding activity. Monoglutamylated at Glu-302 by TTLL4, leading to impair the nucleotidyltransferase activity. Deglutamylated by AGBL5/CCP5 and AGBL6/CCP6. In terms of processing, acetylation at Lys-372, Lys-382 and Lys-402 inhibits the cyclic GMP-AMP synthase activity. Deacetylated upon cytosolic DNA challenge such as viral infections. Acetylation by KAT5 increases the cyclic GMP-AMP synthase activity by promoting DNA-binding and subsequent activation. Proteolytically cleaved by apoptotic caspases during apoptosis, leading to its inactivation. The damage of the nucleus and the mitochondria during apoptosis leads to leakage of nuclear and mitochondrial DNA, which activate CGAS: cleavage and inactivation during apoptosis in required to prevent cytokine overproduction. Cleaved by CASP7 and CASP3 during virus-induced apoptosis, thereby inactivating it and preventing cytokine overproduction. Cleaved by CASP1 upon DNA virus infection; the cleavage impairs cGAMP production. Also cleaved by the pyroptotic CASP4 during non-canonical inflammasome activation; does not cut at the same sites than CASP1. Post-translationally, degraded via selective autophagy following interaction with Irgm1. Irgm1 promotes CGAS recruitment to autophagosome membranes, promoting its SQSTM1/p62-dependent autophagic degradation. In terms of processing, poly-ADP-ribosylation at Glu-176 by PARP1 impairs DNA-binding, thereby preventing the cyclic GMP-AMP synthase activity. Palmitoylation at Cys-459 by ZDHHC18 impairs DNA-binding, thereby preventing the cyclic GMP-AMP synthase activity. Palmitoylation at Cys-392 and Cys-393 by ZDHHC9 promotes homodimerization and cyclic GMP-AMP synthase activity. Depalmitoylation at Cys-392 and Cys-393 by LYPLAL1 impairs homodimerization and cyclic GMP-AMP synthase activity. Post-translationally, monomethylated at Lys-491 by SETD7. Monomethylation promotes interaction with SGF29, preventing interaction between PARP1 nad SGF29. Demethylation by RIOX1 promotes interaction with PARP1, followed by PARP1 inactivation. In terms of processing, lactylation by AARS2 prevents ability to undergo liquid-liquid phase separation (LLPS), thereby inhibiting CGAS activation.

It is found in the nucleus. The protein resides in the chromosome. The protein localises to the cell membrane. Its subcellular location is the cytoplasm. It localises to the cytosol. The catalysed reaction is GTP + ATP = 2',3'-cGAMP + 2 diphosphate. It carries out the reaction GTP + ATP = pppGp(2'-5')A + diphosphate. It catalyses the reaction pppGp(2'-5')A = 2',3'-cGAMP + diphosphate. With respect to regulation, the enzyme activity is strongly increased by double-stranded DNA (dsDNA), but not by single-stranded DNA or RNA. DNA-binding induces the formation of liquid-like droplets in which CGAS is activated. Liquid-like droplets also create a selective environment that restricts entry of negative regulators, such as TREX1 or BANF1/BAF, allowing sensing of DNA. A number of mechanisms exist to restrict its activity toward self-DNA. The nucleotidyltransferase activity is inhibited in the nucleus via its association with nucleosomes: interacts with the acidic patch of histones H2A and H2B, thereby blocking DNA-binding and subsequent activation. CGAS is also inactive when associated with mitotic chromatin. Chromatin-bound CGAS cannot be activated by exogenous DNA in mitotic cells: phosphorylation of the N-terminal disordered part by AURKB during the G2-M transition blocks CGAS liquid phase separation and activation. Activity toward self-DNA is inhibited by BANF1/BAF upon acute loss of nuclear membrane integrity: BANF1/BAF acts by outcompeting CGAS for DNA-binding, thereby preventing CGAS activation. DNA-induced activation at micronuclei is also limited by TREX1, which degrades micronuclear DNA upon nuclear envelope rupture, thereby preventing CGAS activation. CGAS can be released from nucleosomes and activated by MRE11 component of the MRN complex, which displaces CGAS from acidic-patch-mediated sequestration. Acetylation at Lys-372, Lys-382 and Lys-402 inhibits the cyclic GMP-AMP synthase activity. Acetylation by KAT5 increases the cyclic GMP-AMP synthase activity by promoting DNA-binding and subsequent activation. Phosphorylation at Ser-291 suppresses the nucleotidyltransferase activity. Phosphorylation at Ser-420 promotes the cyclic GMP-AMP synthase activity. Phosphorylation at Thr-52 and Ser-199 inhibits its cyclic GMP-AMP synthase activity. Ubiquitination at Lys-372 via 'Lys-27'-linked polyubiquitination enhances the cyclic GMP-AMP synthase activity. Monoubiquitination at Lys-335 promotes oligomerization and subsequent activation. Sumoylation at Lys-335, Lys-372 and Lys-382 prevents DNA-binding, oligomerization and nucleotidyltransferase activity. The enzyme activity is impaired by the cleavage by CASP1. In addition to DNA, also activated by collided ribosomes upon translation stress: specifically binds collided ribosomes, promoting its activation and triggering type-I interferon production. In hematopoietic stem cells, binding to circular RNA cia-cGAS inhibits the cyclic GMP-AMP synthase activity. Strongly inhibited by compound RU.521, which is specific for mouse protein. Its function is as follows. Nucleotidyltransferase that catalyzes the formation of cyclic GMP-AMP (2',3'-cGAMP) from ATP and GTP and plays a key role in innate immunity. Catalysis involves both the formation of a 2',5' phosphodiester linkage at the GpA step and the formation of a 3',5' phosphodiester linkage at the ApG step, producing c[G(2',5')pA(3',5')p]. Acts as a key DNA sensor: directly binds double-stranded DNA (dsDNA), inducing the formation of liquid-like droplets in which CGAS is activated, leading to synthesis of 2',3'-cGAMP, a second messenger that binds to and activates STING1, thereby triggering type-I interferon production. Preferentially binds long dsDNA (around 45 bp) and forms ladder-like networks that function cooperatively to stabilize individual cGAS-dsDNA complexes. Acts as a key foreign DNA sensor, the presence of double-stranded DNA (dsDNA) in the cytoplasm being a danger signal that triggers the immune responses. Has antiviral activity by sensing the presence of dsDNA from DNA viruses in the cytoplasm. Also acts as an innate immune sensor of infection by retroviruses by detecting the presence of reverse-transcribed DNA in the cytosol. Detection of retroviral reverse-transcribed DNA in the cytosol may be indirect and be mediated via interaction with PQBP1, which directly binds reverse-transcribed retroviral DNA. Also detects the presence of DNA from bacteria. 2',3'-cGAMP can be transferred from producing cells to neighboring cells through gap junctions, leading to promote STING1 activation and convey immune response to connecting cells. 2',3'-cGAMP can also be transferred between cells by virtue of packaging within viral particles contributing to IFN-induction in newly infected cells in a cGAS-independent but STING1-dependent manner. Also senses the presence of neutrophil extracellular traps (NETs) that are translocated to the cytosol following phagocytosis, leading to synthesis of 2',3'-cGAMP. In addition to foreign DNA, can also be activated by endogenous nuclear or mitochondrial DNA. When self-DNA leaks into the cytosol during cellular stress (such as mitochondrial stress, DNA damage, mitotic arrest or senescence), or is present in form of cytosolic micronuclei, CGAS is activated leading to a state of sterile inflammation. Acts as a regulator of cellular senescence by binding to cytosolic chromatin fragments that are present in senescent cells, leading to trigger type-I interferon production via STING1 and promote cellular senescence. Also involved in the inflammatory response to genome instability and double-stranded DNA breaks: acts by localizing to micronuclei arising from genome instability. Micronuclei, which as frequently found in cancer cells, consist of chromatin surrounded by its own nuclear membrane: following breakdown of the micronuclear envelope, a process associated with chromothripsis, CGAS binds self-DNA exposed to the cytosol, leading to 2',3'-cGAMP synthesis and subsequent activation of STING1 and type-I interferon production. In a healthy cell, CGAS is however kept inactive even in cellular events that directly expose it to self-DNA, such as mitosis, when cGAS associates with chromatin directly after nuclear envelope breakdown or remains in the form of postmitotic persistent nuclear cGAS pools bound to chromatin. Nuclear CGAS is inactivated by chromatin via direct interaction with nucleosomes, which block CGAS from DNA binding and thus prevent CGAS-induced autoimmunity. Also acts as a suppressor of DNA repair in response to DNA damage: inhibits homologous recombination repair by interacting with PARP1, the CGAS-PARP1 interaction leading to impede the formation of the PARP1-TIMELESS complex. In addition to DNA, also sense translation stress: in response to translation stress, translocates to the cytosol and associates with collided ribosomes, promoting its activation and triggering type-I interferon production. The chain is Cyclic GMP-AMP synthase from Mus musculus (Mouse).